The primary structure comprises 185 residues: Small ribosomal subunit protein bS6 (185 aa).

Basic and acidic residues predominate over residues 115–141; that stretch reads AAQKAAAEKAEAARLEAEKAAEEEAAK. The interval 115–185 is disordered; the sequence is AAQKAAAEKA…EEPKSDEEDA (71 aa). The span at 142–169 shows a compositional bias: low complexity; that stretch reads AAEAQAKEAPAAEAPAEEAPAAEAPAEA. Residues 170 to 185 show a composition bias toward acidic residues; sequence PAEEPAEEPKSDEEDA.

The protein belongs to the bacterial ribosomal protein bS6 family.

Binds together with bS18 to 16S ribosomal RNA. This Desulfatibacillum aliphaticivorans protein is Small ribosomal subunit protein bS6.